Here is a 60-residue protein sequence, read N- to C-terminus: Pepsin-3 (60 aa).

The propeptide at 1–35 is activation peptide; it reads INVPLTRHKSMRESLREKGIELPYQDPAIKYRPEF.

This sequence belongs to the peptidase A1 family.

This Thunnus orientalis (North Pacific bluefin tuna) protein is Pepsin-3.